The following is a 271-amino-acid chain: MPIITKISTQKRKGRYNIFIDNEYAFSVSERTLAERRLLKGTELSNEDIEEIKKAEADSHAIQLAMSYLSYQPRSVYEVLEYLNKHEISQDASQAAVQNLIELNYLNDNNFARLFIKNNLRVGKDGPRTVDRKLKQKGLAADIIQEALYEIEDEEWVDAGLRVVHSLIHQAGKLSYKEIKQKAWTKLRAHGFDQELSELVLEKLDLEKDEDEQIEALKKQGSKAWRRYRKDEDFKRKQKVKRYLFQHGFSSGEIDSFLNGEIVDLEEIDEY.

It belongs to the RecX family.

Its subcellular location is the cytoplasm. Its function is as follows. Modulates RecA activity. In Lactobacillus gasseri (strain ATCC 33323 / DSM 20243 / BCRC 14619 / CIP 102991 / JCM 1131 / KCTC 3163 / NCIMB 11718 / NCTC 13722 / AM63), this protein is Regulatory protein RecX.